The sequence spans 124 residues: Histone H2A (124 aa).

The span at 1-18 (MSGRGKGGKAKGKSKTRS) shows a compositional bias: basic residues. Residues 1 to 23 (MSGRGKGGKAKGKSKTRSSRAGL) are disordered. The residue at position 2 (Ser-2) is an N-acetylserine. Ser-2 carries the post-translational modification Phosphoserine. An N5-methylglutamine modification is found at Gln-104.

Belongs to the histone H2A family. As to quaternary structure, the nucleosome is a histone octamer containing two molecules each of H2A, H2B, H3 and H4 assembled in one H3-H4 heterotetramer and two H2A-H2B heterodimers. The octamer wraps approximately 147 bp of DNA. In terms of processing, phosphorylation of Ser-2 directly represses transcription.

It is found in the nucleus. The protein resides in the chromosome. In terms of biological role, core component of nucleosome. Nucleosomes wrap and compact DNA into chromatin, limiting DNA accessibility to the cellular machineries which require DNA as a template. Histones thereby play a central role in transcription regulation, DNA repair, DNA replication and chromosomal stability. DNA accessibility is regulated via a complex set of post-translational modifications of histones, also called histone code, and nucleosome remodeling. This chain is Histone H2A, found in Platynereis dumerilii (Dumeril's clam worm).